Reading from the N-terminus, the 558-residue chain is Ceramide kinase-like protein (558 aa).

Residues 1-36 (MPWRRRRNRVSALEGGREEEAPPEAAAVPPALLTSP) form a disordered region. 2 short sequence motifs (nuclear localization signal) span residues 2 to 9 (PWRRRRNR) and 102 to 106 (KLKRR). Positions 164–339 (NRPKSLKILL…VDVCTFSTAG (176 aa)) constitute a DAGKc domain.

Phosphorylated on serine residues. Isoform 1 and isoform 2 are expressed in adult retina, liver and pancreas as well as in fetal brain, lung and kidney. Isoform 3 is expressed in adult retina as well as in fetal lung and liver. Isoform 4 is expressed in adult retina, lung and kidney as well as in fetal lung and liver. Moderately expressed in retina, kidney, lung, testis, trachea, and pancreas. Weakly expressed in brain, placenta and liver.

Its subcellular location is the cytoplasm. It localises to the nucleus. The protein resides in the nucleolus. The protein localises to the golgi apparatus. It is found in the trans-Golgi network. Its subcellular location is the endoplasmic reticulum. In terms of biological role, has no detectable ceramide-kinase activity. Overexpression of CERKL protects cells from apoptosis in oxidative stress conditions. The chain is Ceramide kinase-like protein (CERKL) from Homo sapiens (Human).